Consider the following 372-residue polypeptide: tRNA 2-selenouridine synthase (372 aa).

The region spanning 19 to 142 (LASGHPIMDV…MRQYLIDTID (124 aa)) is the Rhodanese domain. The active-site S-selanylcysteine intermediate is C102.

Belongs to the SelU family. As to quaternary structure, monomer.

The enzyme catalyses 5-methylaminomethyl-2-thiouridine(34) in tRNA + selenophosphate + (2E)-geranyl diphosphate + H2O + H(+) = 5-methylaminomethyl-2-selenouridine(34) in tRNA + (2E)-thiogeraniol + phosphate + diphosphate. It carries out the reaction 5-methylaminomethyl-2-thiouridine(34) in tRNA + (2E)-geranyl diphosphate = 5-methylaminomethyl-S-(2E)-geranyl-thiouridine(34) in tRNA + diphosphate. The catalysed reaction is 5-methylaminomethyl-S-(2E)-geranyl-thiouridine(34) in tRNA + selenophosphate + H(+) = 5-methylaminomethyl-2-(Se-phospho)selenouridine(34) in tRNA + (2E)-thiogeraniol. It catalyses the reaction 5-methylaminomethyl-2-(Se-phospho)selenouridine(34) in tRNA + H2O = 5-methylaminomethyl-2-selenouridine(34) in tRNA + phosphate. Functionally, involved in the post-transcriptional modification of the uridine at the wobble position (U34) of tRNA(Lys), tRNA(Glu) and tRNA(Gln). Catalyzes the conversion of 2-thiouridine (S2U-RNA) to 2-selenouridine (Se2U-RNA). Acts in a two-step process involving geranylation of 2-thiouridine (S2U) to S-geranyl-2-thiouridine (geS2U) and subsequent selenation of the latter derivative to 2-selenouridine (Se2U) in the tRNA chain. In Shewanella loihica (strain ATCC BAA-1088 / PV-4), this protein is tRNA 2-selenouridine synthase.